We begin with the raw amino-acid sequence, 364 residues long: MANKTVLFNKHLESNAKMVDFHGWDMPLNYGSQIEEHHAVRQDAGMFDVSHMTVVDVTGTDACAFLRKLLANDVAKLKVPGKALYGGMLDDNAGIIDDLITYYLTDTFYRVVVNSATREKDLAWIAKQSQGFDVTVTERPELAMIAVQGPNAKAKAAAVFSSDQNAAIEGMKPFFGKQAGSLFIATTGYTGEVGYEIIVPETEAEALWQALLDQGVKPCGLGARDTLRLEAGMNLYGLDMDETINPLAANMGWTIAWEPTDRDFIGRKALEALRDAGTDKLVGLVMEEKGVLRHDMPVFFTDAAGVEQQGVITSGTFSPTLGYSIAMARVPNSIGDTAEVEMRKKRVAVRVVAPNFVRNGKQAF.

This sequence belongs to the GcvT family. In terms of assembly, the glycine cleavage system is composed of four proteins: P, T, L and H.

It carries out the reaction N(6)-[(R)-S(8)-aminomethyldihydrolipoyl]-L-lysyl-[protein] + (6S)-5,6,7,8-tetrahydrofolate = N(6)-[(R)-dihydrolipoyl]-L-lysyl-[protein] + (6R)-5,10-methylene-5,6,7,8-tetrahydrofolate + NH4(+). The glycine cleavage system catalyzes the degradation of glycine. In Shewanella sp. (strain MR-4), this protein is Aminomethyltransferase.